The primary structure comprises 492 residues: N-succinylglutamate 5-semialdehyde dehydrogenase (492 aa).

220–225 contributes to the NAD(+) binding site; the sequence is GSASTG. Catalysis depends on residues Glu-243 and Cys-277.

Belongs to the aldehyde dehydrogenase family. AstD subfamily.

It carries out the reaction N-succinyl-L-glutamate 5-semialdehyde + NAD(+) + H2O = N-succinyl-L-glutamate + NADH + 2 H(+). It functions in the pathway amino-acid degradation; L-arginine degradation via AST pathway; L-glutamate and succinate from L-arginine: step 4/5. Its function is as follows. Catalyzes the NAD-dependent reduction of succinylglutamate semialdehyde into succinylglutamate. The chain is N-succinylglutamate 5-semialdehyde dehydrogenase from Salmonella agona (strain SL483).